A 146-amino-acid chain; its full sequence is MGLRLNELSPGVGAKKTAQRRGRGIGSGLGKTGGRGVKGQKSRSGSSIRSGFEGGQMPLYRRLPKFGFTSKMAMTTAEVRLSELSQIEGDVVSIETLKAANLIRRDMKRARVMLSGEVTKAYTFKGIKVTKGAKQAIEAAGGSIEE.

A disordered region spans residues M1–G55. The span at G24–V37 shows a compositional bias: gly residues.

It belongs to the universal ribosomal protein uL15 family. In terms of assembly, part of the 50S ribosomal subunit.

Functionally, binds to the 23S rRNA. This Psychrobacter cryohalolentis (strain ATCC BAA-1226 / DSM 17306 / VKM B-2378 / K5) protein is Large ribosomal subunit protein uL15.